The sequence spans 226 residues: Uracil-DNA glycosylase (226 aa).

Catalysis depends on D64, which acts as the Proton acceptor.

Belongs to the uracil-DNA glycosylase (UDG) superfamily. UNG family.

It localises to the cytoplasm. The enzyme catalyses Hydrolyzes single-stranded DNA or mismatched double-stranded DNA and polynucleotides, releasing free uracil.. Functionally, excises uracil residues from the DNA which can arise as a result of misincorporation of dUMP residues by DNA polymerase or due to deamination of cytosine. This is Uracil-DNA glycosylase from Vibrio vulnificus (strain CMCP6).